The sequence spans 345 residues: Transcription initiation factor IIB (345 aa).

A TFIIB-type zinc finger spans residues 20–53 (IVLTCPECKVYPPKIVERFSEGDVVCALCGLVLS). Cysteine 24, cysteine 27, cysteine 45, and cysteine 48 together coordinate Zn(2+). Residues 65-78 (TFSNDDHNGDDPSR) are compositionally biased toward basic and acidic residues. The segment at 65-93 (TFSNDDHNGDDPSRVGEASNPLLDGNNLS) is disordered. 2 consecutive repeat copies span residues 136–212 (LCDA…IMKN) and 242–318 (FCSH…ILYE).

This sequence belongs to the TFIIB family. Associates with TFIID-IIA (DA complex) to form TFIID-IIA-IIB (DAB-complex) which is then recognized by polymerase II.

Its subcellular location is the nucleus. Its function is as follows. General factor that plays a major role in the activation of eukaryotic genes transcribed by RNA polymerase II. The protein is Transcription initiation factor IIB (SUA7) of Saccharomyces cerevisiae (strain ATCC 204508 / S288c) (Baker's yeast).